Here is a 369-residue protein sequence, read N- to C-terminus: MNKAYYIGLMSGTSMDGVDAVLVDFAGEQPQLIGTHTETIPTHLLKGLQRLCLPGTDEINRLGRLDRSVGKLFALAVNNLLAKTKIAKDEIIAIGSHGQTVRHMPNLEVGFTLQIGDPNTIATETGIDVIADFRRKDIALGGQGAPLVPAFHQQTFAQVGKKRVILNIGGIANITYLPGNSEEVLGFDTGPGNTLIDAWVQQVKNESYDKNGAWAASGKTDPQLLAQLLSHPYFSLAYPKSTGRELFNQAWLEQQLSAFNQLNEEDIQSTLLDLTCHSIAQDILKLAQEGELFVCGGGAFNAELMQRLAALLPGYRIDTTSALGVDPKWAEGIAFAWLAMRYQLGLPANLPAVTGASREAILGGRFSAK.

12–19 (GTSMDGVD) lines the ATP pocket.

The protein belongs to the anhydro-N-acetylmuramic acid kinase family.

It catalyses the reaction 1,6-anhydro-N-acetyl-beta-muramate + ATP + H2O = N-acetyl-D-muramate 6-phosphate + ADP + H(+). It functions in the pathway amino-sugar metabolism; 1,6-anhydro-N-acetylmuramate degradation. It participates in cell wall biogenesis; peptidoglycan recycling. Its function is as follows. Catalyzes the specific phosphorylation of 1,6-anhydro-N-acetylmuramic acid (anhMurNAc) with the simultaneous cleavage of the 1,6-anhydro ring, generating MurNAc-6-P. Is required for the utilization of anhMurNAc either imported from the medium or derived from its own cell wall murein, and thus plays a role in cell wall recycling. This chain is Anhydro-N-acetylmuramic acid kinase, found in Shewanella oneidensis (strain ATCC 700550 / JCM 31522 / CIP 106686 / LMG 19005 / NCIMB 14063 / MR-1).